The following is a 222-amino-acid chain: Superoxide dismutase [Mn], mitochondrial (222 aa).

A mitochondrion-targeting transit peptide spans 1–24 (MLCRAACSTSRKLVPALGSLGSRQ). H50 provides a ligand contact to Mn(2+). Y58 carries the post-translational modification 3'-nitrotyrosine. 2 positions are modified to N6-acetyllysine; alternate: K68 and K75. K68 and K75 each carry N6-succinyllysine; alternate. Mn(2+) is bound at residue H98. K114 bears the N6-acetyllysine mark. An N6-acetyllysine; alternate mark is found at K122 and K130. N6-succinyllysine; alternate is present on residues K122 and K130. Positions 183 and 187 each coordinate Mn(2+). An N6-acetyllysine modification is found at K202.

It belongs to the iron/manganese superoxide dismutase family. In terms of assembly, homotetramer. It depends on Mn(2+) as a cofactor. In terms of processing, nitrated under oxidative stress. Nitration coupled with oxidation inhibits the catalytic activity. Post-translationally, acetylation at Lys-122 decreases enzymatic activity. Deacetylated by SIRT3 upon exposure to ionizing radiations or after long fasting. Polyubiquitinated; leading to proteasomal degradation. Deubiquitinated by USP36 which increases protein stability.

Its subcellular location is the mitochondrion matrix. The enzyme catalyses 2 superoxide + 2 H(+) = H2O2 + O2. Functionally, destroys superoxide anion radicals which are normally produced within the cells and which are toxic to biological systems. The polypeptide is Superoxide dismutase [Mn], mitochondrial (SOD2) (Equus caballus (Horse)).